The following is a 197-amino-acid chain: Small ribosomal subunit protein uS5 (197 aa).

A disordered region spans residues Met-1–Ser-27. The 64-residue stretch at Phe-29–Val-92 folds into the S5 DRBM domain.

The protein belongs to the universal ribosomal protein uS5 family. As to quaternary structure, part of the 30S ribosomal subunit. Contacts proteins S4 and S8.

With S4 and S12 plays an important role in translational accuracy. In terms of biological role, located at the back of the 30S subunit body where it stabilizes the conformation of the head with respect to the body. The polypeptide is Small ribosomal subunit protein uS5 (Bradyrhizobium diazoefficiens (strain JCM 10833 / BCRC 13528 / IAM 13628 / NBRC 14792 / USDA 110)).